Here is a 1874-residue protein sequence, read N- to C-terminus: Protein TIC 214 (1874 aa).

6 helical membrane passes run 18–38, 64–84, 87–107, 124–144, 172–192, and 221–241; these read IINSVVVVGLYYGFLTTFSIG, FITGQLMMFISIYYAPLHLAL, PHTITVLALPYLLFHFFWNNH, LSIQCVFLNNLIFQLFNYFIL, VGWLIGHILFMKWLGLVLVWI, and IFSILLFITCVYYLGRIPSPI. 2 disordered regions span residues 248–310 and 1567–1624; these read ETSK…EIRV and KTEC…NEED. A compositionally biased stretch (acidic residues) spans 255–268; the sequence is GVESEEEGDVEIET. 2 stretches are compositionally biased toward basic and acidic residues: residues 298–310 and 1584–1601; these read DSNKIDETEEIRV and NQKEKETPADQEDLRSDA.

The protein belongs to the TIC214 family. As to quaternary structure, part of the Tic complex.

The protein localises to the plastid. The protein resides in the chloroplast inner membrane. Involved in protein precursor import into chloroplasts. May be part of an intermediate translocation complex acting as a protein-conducting channel at the inner envelope. This chain is Protein TIC 214, found in Coffea arabica (Arabian coffee).